The primary structure comprises 279 residues: ATP-dependent Clp protease proteolytic subunit-related protein 2, chloroplastic (279 aa).

Residues 1–54 constitute a chloroplast transit peptide; the sequence is MAVSFNTTLHQPSLSPSCSIKLYSGLKPQSASFLASGYQNLNKEFYGRVYKSLQ.

It belongs to the peptidase S14 family. In terms of assembly, component of the chloroplastic Clp protease core complex which consist of at least 16 proteins: CLPP4 (3 copies), CLPP5 (3 copies), CLPR4 (2 copies), ClpP1 (1 copy), CLPP6 (1 copy), CLPR2 (1 copy), CLPT1 (1 copy), CLPT2 (1 copy) and 3 copies of CLPP3 and/or CLPR1 and/or CLPR3. The core complex is organized in two heptameric rings, one containing CLPP3,4,5,6 in a 1:2:3:1 ratio and the other CLPP1 and CLPR1,2,3,4 in a 3:1:1:1:1 ratio. Expressed at least in leaves and roots.

The protein resides in the plastid. Its subcellular location is the chloroplast. In terms of biological role, required for chloroplast development and integrity. Involved in the regulation of plastoglobules formation. The polypeptide is ATP-dependent Clp protease proteolytic subunit-related protein 2, chloroplastic (Arabidopsis thaliana (Mouse-ear cress)).